The primary structure comprises 382 residues: Mannitol-1-phosphate 5-dehydrogenase (382 aa).

A3 to G14 is a binding site for NAD(+).

The protein belongs to the mannitol dehydrogenase family.

The enzyme catalyses D-mannitol 1-phosphate + NAD(+) = beta-D-fructose 6-phosphate + NADH + H(+). In Klebsiella pneumoniae (strain 342), this protein is Mannitol-1-phosphate 5-dehydrogenase.